The chain runs to 126 residues: Phosphoribosyl-AMP cyclohydrolase (126 aa).

Residue Asp76 coordinates Mg(2+). Cys77 is a binding site for Zn(2+). 2 residues coordinate Mg(2+): Asp78 and Asp80. Zn(2+) contacts are provided by Cys94 and Cys101.

It belongs to the PRA-CH family. Homodimer. Mg(2+) is required as a cofactor. Requires Zn(2+) as cofactor.

The protein resides in the cytoplasm. The enzyme catalyses 1-(5-phospho-beta-D-ribosyl)-5'-AMP + H2O = 1-(5-phospho-beta-D-ribosyl)-5-[(5-phospho-beta-D-ribosylamino)methylideneamino]imidazole-4-carboxamide. It participates in amino-acid biosynthesis; L-histidine biosynthesis; L-histidine from 5-phospho-alpha-D-ribose 1-diphosphate: step 3/9. Functionally, catalyzes the hydrolysis of the adenine ring of phosphoribosyl-AMP. The polypeptide is Phosphoribosyl-AMP cyclohydrolase (Ruthia magnifica subsp. Calyptogena magnifica).